The sequence spans 410 residues: D-amino acid dehydrogenase (410 aa).

Residue 9–14 (GGGIVG) coordinates FAD.

The protein belongs to the DadA oxidoreductase family. The cofactor is FAD.

Its subcellular location is the cell inner membrane. It carries out the reaction a D-alpha-amino acid + a quinone + H2O = a 2-oxocarboxylate + a quinol + NH4(+). Activity is markedly inhibited by benzoate, and moderately by SH reagents such as p-hydroxymercuribenzoate, iodoacetamide, and iodoacetate. Functionally, catalyzes the oxidative deamination of D-amino acids. Has broad substrate specificity; is mostly active on D-proline, and to a lesser extent, on several other D-amino acids such as D-alanine, D-phenylalanine and D-serine. Mediates electron transport from D-proline to coenzyme Q1 in vitro, and is involved in the electron transport chain from D-proline to the c-type cytochrome in vivo. In Helicobacter pylori (Campylobacter pylori), this protein is D-amino acid dehydrogenase.